Reading from the N-terminus, the 176-residue chain is Peptide methionine sulfoxide reductase MsrA (176 aa).

The active site involves C10.

It belongs to the MsrA Met sulfoxide reductase family.

The enzyme catalyses L-methionyl-[protein] + [thioredoxin]-disulfide + H2O = L-methionyl-(S)-S-oxide-[protein] + [thioredoxin]-dithiol. The catalysed reaction is [thioredoxin]-disulfide + L-methionine + H2O = L-methionine (S)-S-oxide + [thioredoxin]-dithiol. Has an important function as a repair enzyme for proteins that have been inactivated by oxidation. Catalyzes the reversible oxidation-reduction of methionine sulfoxide in proteins to methionine. In Leptospira borgpetersenii serovar Hardjo-bovis (strain L550), this protein is Peptide methionine sulfoxide reductase MsrA.